The chain runs to 119 residues: Large ribosomal subunit protein eL31 (119 aa).

This sequence belongs to the eukaryotic ribosomal protein eL31 family.

This Cyanophora paradoxa protein is Large ribosomal subunit protein eL31 (RPL31).